A 62-amino-acid polypeptide reads, in one-letter code: uncharacterized protein (62 aa).

An N-terminal signal peptide occupies residues 1-22 (MVNVALLLDQIIATPLRSMVEA).

This is an uncharacterized protein from Archaeoglobus fulgidus (strain ATCC 49558 / DSM 4304 / JCM 9628 / NBRC 100126 / VC-16).